Reading from the N-terminus, the 3434-residue chain is Genome polyprotein (3434 aa).

Topologically, residues 1–106 are cytoplasmic; it reads MSKKPGGPGR…NRGTKKKRGN (106 aa). The tract at residues 2–15 is interaction with host EXOC1; it reads SKKPGGPGRNRAIN. The tract at residues 37-72 is hydrophobic; homodimerization of capsid protein C; sequence LLDGRGPVRFVLALMTFFKFTALAPTKALLGRWKRI. Positions 105–126 are cleaved as a propeptide — ER anchor for the capsid protein C, removed in mature form by serine protease NS3; it reads GNNGPGLVMIITLMTVVSMVSS. A helical membrane pass occupies residues 107–126; it reads NGPGLVMIITLMTVVSMVSS. The Extracellular portion of the chain corresponds to 127-248; the sequence is LKLSNFQGKV…DSTKASRYLM (122 aa). N-linked (GlcNAc...) asparagine; by host glycosylation is present at N141. A helical transmembrane segment spans residues 249–273; that stretch reads KTENWIIRNPGYAFVAVLLGWMLGS. Topologically, residues 274–278 are cytoplasmic; that stretch reads NNGQR. The helical transmembrane segment at 279-293 threads the bilayer; the sequence is VVFVVLLLLVAPAYS. The Extracellular segment spans residues 294-745; the sequence is FNCLGMSNRD…QVFGGAFRTL (452 aa). 8 disulfides stabilise this stretch: C296/C323, C353/C409, C353/C414, C367/C398, C385/C409, C385/C414, C483/C580, and C597/C628. The tract at residues 391-404 is fusion peptide; sequence DRGWGNGCGLFGKG. Residues 746–766 traverse the membrane as a helical segment; it reads FGGMSWITQGLMGALLLWMGV. Residues 767-772 are Cytoplasmic-facing; that stretch reads NARDRS. Residues 773–793 traverse the membrane as a helical segment; it reads IALVMLATGGVLLFLATNVHA. The Extracellular segment spans residues 794–1218; sequence DSGCAIDVGR…AFAEANSGGD (425 aa). 2 disulfides stabilise this stretch: C797–C808 and C848–C936. Residues N923, N968, and N1000 are each glycosylated (N-linked (GlcNAc...) asparagine; by host). Intrachain disulfides connect C972-C1016, C1073-C1122, C1084-C1105, C1084-C1106, C1105-C1109, and C1106-C1109. The chain crosses the membrane as a helical span at residues 1219–1239; the sequence is VVHLALIAAFKIQPGFLAMTF. At 1240 to 1249 the chain is on the cytoplasmic side; it reads LRGKWTNQEN. A helical transmembrane segment spans residues 1250–1270; the sequence is ILLALGAAFFQMAATDLNFSL. The Lumenal segment spans residues 1271–1286; that stretch reads PGILNATATAWMLLRA. A helical membrane pass occupies residues 1287-1307; that stretch reads ATQPSTSAIVMPLLCLLAPGM. Position 1308 (R1308) is a topological domain, cytoplasmic. A helical transmembrane segment spans residues 1309-1329; the sequence is LLYLDTYRITLIIIGICSLIG. The Lumenal portion of the chain corresponds to 1330-1340; sequence ERRRAAAKKKG. The helical transmembrane segment at 1341-1361 threads the bilayer; that stretch reads AVLLGLALTSTGQFSASVMAA. The Cytoplasmic segment spans residues 1362 to 1373; the sequence is GLMACNPNKKRG. Residues 1374–1394 traverse the membrane as a helical segment; that stretch reads WPATEVLTAVGLMFAIVGGLA. Residues 1395-1397 lie on the Lumenal side of the membrane; that stretch reads ELD. A helical membrane pass occupies residues 1398–1418; that stretch reads VDSMSIPFVLAGLMAVSYTIS. Residues 1419–1475 are Cytoplasmic-facing; it reads GKSTDLWLERAADITWETDAAITGTSQRLDVKLDDDGDFHLINDPGVPWKIWVIRMT. The interval 1426-1465 is interacts with and activates NS3 protease; sequence LERAADITWETDAAITGTSQRLDVKLDDDGDFHLINDPGV. The helical intramembrane region spans 1476–1496; it reads ALGFAAWTPWAIIPAGIGYWL. Over 1497 to 2173 the chain is Cytoplasmic; it reads TVKYAKRGGV…MALEELPDAL (677 aa). The region spanning 1504 to 1681 is the Peptidase S7 domain; sequence GGVFWDTPAP…EREEEPVPEA (178 aa). Catalysis depends on charge relay system; for serine protease NS3 activity residues H1554, D1578, and S1638. The Helicase ATP-binding domain maps to 1684-1840; it reads ADMLRKKQLT…DTNAPVTDIQ (157 aa). The tract at residues 1688 to 1691 is important for RNA-binding; that stretch reads RKKQ. 1697–1704 contributes to the ATP binding site; sequence LHPGAGKT. A DEAH box motif is present at residues 1788–1791; the sequence is DEAH. The Helicase C-terminal domain maps to 1851-2016; sequence GFEWITEYTG…GLVAQMYGPE (166 aa). K1892 is modified (N6-acetyllysine; by host). Residues 1956-1980 are disordered; it reads ASAAQRRGRVGRNPSQIGDEYHYGG. The segment at 2167 to 2171 is regulates the ATPase activity of NS3 helicase; that stretch reads EELPD. A helical membrane pass occupies residues 2174 to 2194; the sequence is ETITLIVALAVMTAGVFLLLV. Topologically, residues 2195–2198 are lumenal; it reads QRRG. Positions 2199-2219 form an intramembrane region, helical; sequence IGKLGLGGMVLGLATFFLWMA. D2220 is a topological domain (lumenal). A helical transmembrane segment spans residues 2221-2241; the sequence is VSGTKIAGTLLLALLMMIVLI. The Cytoplasmic portion of the chain corresponds to 2242-2256; that stretch reads PEPEKQRSQTDNQLA. A helical membrane pass occupies residues 2257–2277; that stretch reads VFLICVLLVVGVVAANEYGML. The Lumenal portion of the chain corresponds to 2278 to 2313; the sequence is ERTKSDLGKIFSSTRQPQSALPLPSMNALALDLRPA. The helical intramembrane region spans 2314–2334; that stretch reads TAWALYGGSTVVLTPLIKHLV. The Lumenal portion of the chain corresponds to 2335–2368; sequence TSEYITTSLASISAQAGSLFNLPRGLPFTELDFT. The chain crosses the membrane as a helical span at residues 2369-2389; sequence VVLVFLGCWGQVSLTTLITAA. Residues 2390–2446 lie on the Cytoplasmic side of the membrane; it reads ALATLHYGYMLPGWQAEALRAAQRRTAAGIMKNAVVDGLVATDVPELERTTPLMQKK. Residues 2447–2467 form a helical membrane-spanning segment; it reads VGQILLIGVSAAALLVNPCVT. Over 2468–2471 the chain is Lumenal; that stretch reads TVRE. The helical transmembrane segment at 2472 to 2492 threads the bilayer; the sequence is AGILISAALLTLWDNGAIAVW. Over 2493–3434 the chain is Cytoplasmic; that stretch reads NSTTATGLCH…EVNVQEDRVL (942 aa). Positions 2530–2795 constitute an mRNA cap 0-1 NS5-type MT domain; the sequence is GRPGGRTLGE…DVNLGSGTRA (266 aa). The tract at residues 2567 to 2587 is disordered; sequence SAARKARRDGNKTGGHPVSRG. S-adenosyl-L-methionine is bound at residue S2585. At S2585 the chain carries Phosphoserine. The active-site For 2'-O-MTase activity is K2590. S-adenosyl-L-methionine is bound by residues G2615, W2616, T2633, K2634, D2660, and V2661. D2675 (for 2'-O-MTase activity) is an active-site residue. Position 2676 (I2676) interacts with S-adenosyl-L-methionine. Residues K2711 and E2747 each act as for 2'-O-MTase activity in the active site. Y2749 contributes to the S-adenosyl-L-methionine binding site. 4 residues coordinate Zn(2+): E2969, H2973, C2978, and C2981. The RdRp catalytic domain occupies 3059–3211; that stretch reads GKMYADDTAG…KPLDDRFANA (153 aa). 3 residues coordinate Zn(2+): H3246, C3262, and C3381.

In the N-terminal section; belongs to the class I-like SAM-binding methyltransferase superfamily. mRNA cap 0-1 NS5-type methyltransferase family. As to quaternary structure, homodimer. Interacts (via N-terminus) with host EXOC1 (via C-terminus); this interaction results in EXOC1 degradation through the proteasome degradation pathway. In terms of assembly, forms heterodimers with envelope protein E in the endoplasmic reticulum and Golgi. Homodimer; in the endoplasmic reticulum and Golgi. Interacts with protein prM. Interacts with non-structural protein 1. As to quaternary structure, homodimer; Homohexamer when secreted. Interacts with envelope protein E. NS1 interacts with NS4B. Interacts with host complement protein CFH; this interaction leads to the degradation of C3. In terms of assembly, interacts (via N-terminus) with serine protease NS3. Forms a heterodimer with serine protease NS3. May form homooligomers. As to quaternary structure, forms a heterodimer with NS2B. Interacts with non-structural protein 2A (via N-terminus). Interacts with NS4B. Interacts with unphosphorylated RNA-directed RNA polymerase NS5; this interaction stimulates RNA-directed RNA polymerase NS5 guanylyltransferase activity. In terms of assembly, interacts with serine protease NS3. Homodimer. Interacts with host STAT2; this interaction inhibits the phosphorylation of the latter, and, when all viral proteins are present (polyprotein), targets STAT2 for degradation. Interacts with serine protease NS3. In terms of processing, specific enzymatic cleavages in vivo yield mature proteins. Cleavages in the lumen of endoplasmic reticulum are performed by host signal peptidase, whereas cleavages in the cytoplasmic side are performed by serine protease NS3. Signal cleavage at the 2K-4B site requires a prior NS3 protease-mediated cleavage at the 4A-2K site. Post-translationally, cleaved in post-Golgi vesicles by a host furin, releasing the mature small envelope protein M, and peptide pr. This cleavage is incomplete as up to 30% of viral particles still carry uncleaved prM. N-glycosylated. In terms of processing, N-glycosylated. The excreted form is glycosylated and this is required for efficient secretion of the protein from infected cells. Post-translationally, acetylated by host KAT5. Acetylation modulates NS3 RNA-binding and unwinding activities and plays an important positive role for viral replication. Phosphorylated on serines residues. This phosphorylation may trigger NS5 nuclear localization.

It localises to the virion. The protein localises to the host nucleus. The protein resides in the host cytoplasm. It is found in the host perinuclear region. Its subcellular location is the secreted. It localises to the virion membrane. The protein localises to the host endoplasmic reticulum membrane. The enzyme catalyses Selective hydrolysis of -Xaa-Xaa-|-Yaa- bonds in which each of the Xaa can be either Arg or Lys and Yaa can be either Ser or Ala.. The catalysed reaction is RNA(n) + a ribonucleoside 5'-triphosphate = RNA(n+1) + diphosphate. It catalyses the reaction a ribonucleoside 5'-triphosphate + H2O = a ribonucleoside 5'-diphosphate + phosphate + H(+). It carries out the reaction ATP + H2O = ADP + phosphate + H(+). The enzyme catalyses a 5'-end (5'-triphosphoguanosine)-ribonucleoside in mRNA + S-adenosyl-L-methionine = a 5'-end (N(7)-methyl 5'-triphosphoguanosine)-ribonucleoside in mRNA + S-adenosyl-L-homocysteine. The catalysed reaction is a 5'-end (N(7)-methyl 5'-triphosphoguanosine)-ribonucleoside in mRNA + S-adenosyl-L-methionine = a 5'-end (N(7)-methyl 5'-triphosphoguanosine)-(2'-O-methyl-ribonucleoside) in mRNA + S-adenosyl-L-homocysteine + H(+). Functionally, plays a role in virus budding by binding to the cell membrane and gathering the viral RNA into a nucleocapsid that forms the core of a mature virus particle. During virus entry, may induce genome penetration into the host cytoplasm after hemifusion induced by the surface proteins. Can migrate to the cell nucleus where it modulates host functions. Overcomes the anti-viral effects of host EXOC1 by sequestering and degrading the latter through the proteasome degradation pathway. In terms of biological role, inhibits RNA silencing by interfering with host Dicer. Prevents premature fusion activity of envelope proteins in trans-Golgi by binding to envelope protein E at pH6.0. After virion release in extracellular space, gets dissociated from E dimers. Its function is as follows. Acts as a chaperone for envelope protein E during intracellular virion assembly by masking and inactivating envelope protein E fusion peptide. prM is the only viral peptide matured by host furin in the trans-Golgi network probably to avoid catastrophic activation of the viral fusion activity in acidic Golgi compartment prior to virion release. prM-E cleavage is inefficient, and many virions are only partially matured. These uncleaved prM would play a role in immune evasion. Functionally, may play a role in virus budding. Exerts cytotoxic effects by activating a mitochondrial apoptotic pathway through M ectodomain. May display a viroporin activity. In terms of biological role, binds to host cell surface receptor and mediates fusion between viral and cellular membranes. Envelope protein is synthesized in the endoplasmic reticulum in the form of heterodimer with protein prM. They play a role in virion budding in the ER, and the newly formed immature particle is covered with 60 spikes composed of heterodimer between precursor prM and envelope protein E. The virion is transported to the Golgi apparatus where the low pH causes dissociation of PrM-E heterodimers and formation of E homodimers. prM-E cleavage is inefficient, and many virions are only partially matured. These uncleaved prM would play a role in immune evasion. Involved in immune evasion, pathogenesis and viral replication. Once cleaved off the polyprotein, is targeted to three destinations: the viral replication cycle, the plasma membrane and the extracellular compartment. Essential for viral replication. Required for formation of the replication complex and recruitment of other non-structural proteins to the ER-derived membrane structures. Excreted as a hexameric lipoparticle that plays a role against host immune response. Antagonizing the complement function. Binds to the host macrophages and dendritic cells. Inhibits signal transduction originating from Toll-like receptor 3 (TLR3). Its function is as follows. Component of the viral RNA replication complex that functions in virion assembly and antagonizes the host alpha/beta interferon antiviral response. Functionally, required cofactor for the serine protease function of NS3. May have membrane-destabilizing activity and form viroporins. In terms of biological role, displays three enzymatic activities: serine protease, NTPase and RNA helicase. NS3 serine protease, in association with NS2B, performs its autocleavage and cleaves the polyprotein at dibasic sites in the cytoplasm: C-prM, NS2A-NS2B, NS2B-NS3, NS3-NS4A, NS4A-2K and NS4B-NS5. NS3 RNA helicase binds RNA and unwinds dsRNA in the 3' to 5' direction. Regulates the ATPase activity of the NS3 helicase activity. NS4A allows NS3 helicase to conserve energy during unwinding. Its function is as follows. Functions as a signal peptide for NS4B and is required for the interferon antagonism activity of the latter. Functionally, induces the formation of ER-derived membrane vesicles where the viral replication takes place. Inhibits interferon (IFN)-induced host STAT1 phosphorylation and nuclear translocation, thereby preventing the establishment of cellular antiviral state by blocking the IFN-alpha/beta pathway. Inhibits STAT2 translocation in the nucleus after IFN-alpha treatment. In terms of biological role, replicates the viral (+) and (-) RNA genome, and performs the capping of genomes in the cytoplasm. NS5 methylates viral RNA cap at guanine N-7 and ribose 2'-O positions. Besides its role in RNA genome replication, also prevents the establishment of cellular antiviral state by blocking the interferon-alpha/beta (IFN-alpha/beta) signaling pathway. Inhibits host TYK2 and STAT2 phosphorylation, thereby preventing activation of JAK-STAT signaling pathway. This Usutu virus (USUV) protein is Genome polyprotein.